A 104-amino-acid polypeptide reads, in one-letter code: Probable monothiol glutaredoxin 2 (104 aa).

Residues 7–104 (FEFIENEIKN…NGELEKMLKG (98 aa)) enclose the Glutaredoxin domain. Glutathione is bound at residue Lys24. Cys32 is a binding site for [2Fe-2S] cluster. Glutathione is bound by residues Arg61, Phe73, and 86–87 (CD).

The protein belongs to the glutaredoxin family. Monothiol subfamily.

The sequence is that of Probable monothiol glutaredoxin 2 (grxC2) from Rickettsia felis (strain ATCC VR-1525 / URRWXCal2) (Rickettsia azadi).